Reading from the N-terminus, the 176-residue chain is Large ribosomal subunit protein uL6 (176 aa).

This sequence belongs to the universal ribosomal protein uL6 family. As to quaternary structure, part of the 50S ribosomal subunit.

This protein binds to the 23S rRNA, and is important in its secondary structure. It is located near the subunit interface in the base of the L7/L12 stalk, and near the tRNA binding site of the peptidyltransferase center. This is Large ribosomal subunit protein uL6 from Methanospirillum hungatei JF-1 (strain ATCC 27890 / DSM 864 / NBRC 100397 / JF-1).